Consider the following 732-residue polypeptide: 1,4-alpha-glucan branching enzyme GlgB 1 (732 aa).

The active-site Nucleophile is the Asp-411. The Proton donor role is filled by Glu-464.

This sequence belongs to the glycosyl hydrolase 13 family. GlgB subfamily. As to quaternary structure, monomer.

The catalysed reaction is Transfers a segment of a (1-&gt;4)-alpha-D-glucan chain to a primary hydroxy group in a similar glucan chain.. It participates in glycan biosynthesis; glycogen biosynthesis. Catalyzes the formation of the alpha-1,6-glucosidic linkages in glycogen by scission of a 1,4-alpha-linked oligosaccharide from growing alpha-1,4-glucan chains and the subsequent attachment of the oligosaccharide to the alpha-1,6 position. The chain is 1,4-alpha-glucan branching enzyme GlgB 1 from Xanthomonas oryzae pv. oryzae (strain KACC10331 / KXO85).